Reading from the N-terminus, the 242-residue chain is MKILIPTAKEMNTDLPSIEAIPLKPESQAVLDALALYSASQLESFYKVSAEKAAEEFQNIQALKRQTAQHYPALKLFDGLMYRNIKRDKLTEAEQDYLENHVFITSALYGVVPVLSPMAPHRLDFLMKLKVAGKTLKSHWKAAYDETLKKEEVIFSLLSSEFETVFSKEIRAKMVTLKFMEDRGGQLKIHSTISKKARGAFLTALIENQVQTVGEARRLNFAGFVYREDLSQPQGLVFVKEV.

This sequence belongs to the UPF0246 family.

This chain is UPF0246 protein SPP_1571, found in Streptococcus pneumoniae (strain P1031).